Consider the following 815-residue polypeptide: MGSDKRVSRTERSGRYGSIIDRDDRDERESRSRRRDSDYKRSSDDRRGDRYDDYRDYDSPERERERRNSDRSEDGYHSDGDYGEHDYRHDISDERESKTIMLRGLPITITESDIREMMESFEGPQPADVRLMKRKTGVSRGFAFVEFYHLQDATSWMEANQKKLVIQGKHIAMHYSNPRPKFEDWLCNKCCLNNFRKRLKCFRCGADKFDSEQEVPPGTTESVQSVDYYCDTIILRNIAPHTVVDSIMTALSPYASLAVNNIRLIKDKQTQQNRGFAFVQLSSAMDASQLLQILQSLHPPLKIDGKTIGVDFAKSARKDLVLPDGNRVSAFSVASTAIAAAQWSSTQSQSGEGGNVDYSYMQPGQDGYTQYTQYSQDYQQFYQQQTGGLESDASATSGTTVTTTSAAVVSQSPQLYNQTSNPPGSPTEEAQPSTSTSTQAPAASPTGVVPGTKYAVPDTSTYQYDESSGYYYDPTTGLYYDPNSQYYYNSLTQQYLYWDGEKETYVPAAESSSNQQAGLPSTKEGKEKKEKPKSKTAQQIAKDMERWAKSLNKQKENFKNSFQPVNSLREEERRESAAADAGFALFEKKGALAERQQLIPELVRNGDEENPLKRGLVAAYSGDSDNEEELVERLESEEEKLADWKKMACLLCRRQFPNRDALVRHQQLSDLHKQNMDIYRRSRLSEQELEALELREREMKYRDRAAERREKYGIPEPPEPKRKKQFDAGTVNYEQPTKDGIDHSNIGNKMLQAMGWREGSGLGRKCQGITAPIEAQVRLKGAGLGAKGSAYGLSGADSYKDAVRKAMFARFTEME.

The disordered stretch occupies residues 1 to 93 (MGSDKRVSRT…EHDYRHDISD (93 aa)). Phosphoserine occurs at positions 18, 59, 69, 72, and 78. The RRM 1 domain occupies 98 to 178 (KTIMLRGLPI…KHIAMHYSNP (81 aa)). The RanBP2-type zinc finger occupies 181–210 (KFEDWLCNKCCLNNFRKRLKCFRCGADKFD). The region spanning 231–315 (DTIILRNIAP…KTIGVDFAKS (85 aa)) is the RRM 2 domain. The required for interaction with U2AF2 stretch occupies residues 321–809 (VLPDGNRVSA…KDAVRKAMFA (489 aa)). Disordered regions lie at residues 407 to 468 (AVVS…DESS) and 508 to 540 (AAES…AQQI). A compositionally biased stretch (polar residues) spans 411–422 (QSPQLYNQTSNP). The segment covering 426 to 446 (PTEEAQPSTSTSTQAPAASPT) has biased composition (low complexity). Phosphoserine is present on serine 444. Residues 452–535 (TKYAVPDTST…KEKKEKPKSK (84 aa)) are sufficient for interaction with ACIN1, PRPF8, SFRS3, SNRPB, SNRPN, SNRNP70 and SNRNP200. Residues 510–519 (ESSSNQQAGL) are compositionally biased toward polar residues. Phosphoserine occurs at positions 621 and 624. Residues 647–672 (MACLLCRRQFPNRDALVRHQQLSDLH) form a C2H2-type zinc finger. Residues 743–789 (HSNIGNKMLQAMGWREGSGLGRKCQGITAPIEAQVRLKGAGLGAKGS) enclose the G-patch domain.

This sequence belongs to the RBM5/RBM10 family. In terms of assembly, component of the spliceosome A complex (also known as the prespliceosome). Appears to dissociate from the spliceosome upon formation of the spliceosome B complex (also known as the precatalytic spliceosome), in which the heterotrimeric U4/U6.U5 snRNPs are bound. Interacts with U2AF2; this interaction is direct. Also interacts with ACIN1, PRPF8, SFRS3, SNRPB, SNRPN, SNRNP70 and SNRNP200; these interactions may be indirect.

The protein resides in the nucleus. In terms of biological role, component of the spliceosome A complex. Binds to ssRNA containing the consensus sequence 5'-AGGUAA-3'. Regulates alternative splicing of a number of mRNAs. May modulate splice site pairing after recruitment of the U1 and U2 snRNPs to the 5' and 3' splice sites of the intron. May both positively and negatively regulate apoptosis by regulating the alternative splicing of several genes involved in this process, including FAS and CASP2/caspase-2. In the case of FAS, promotes production of a soluble form of FAS that inhibits apoptosis. In the case of CASP2/caspase-2, promotes production of a catalytically active form of CASP2/Caspase-2 that induces apoptosis. The sequence is that of RNA-binding protein 5 (Rbm5) from Rattus norvegicus (Rat).